The chain runs to 266 residues: Tryptophan synthase alpha chain (266 aa).

Catalysis depends on proton acceptor residues Glu-47 and Asp-58.

The protein belongs to the TrpA family. As to quaternary structure, tetramer of two alpha and two beta chains.

It carries out the reaction (1S,2R)-1-C-(indol-3-yl)glycerol 3-phosphate + L-serine = D-glyceraldehyde 3-phosphate + L-tryptophan + H2O. Its pathway is amino-acid biosynthesis; L-tryptophan biosynthesis; L-tryptophan from chorismate: step 5/5. Functionally, the alpha subunit is responsible for the aldol cleavage of indoleglycerol phosphate to indole and glyceraldehyde 3-phosphate. The chain is Tryptophan synthase alpha chain from Leptospira biflexa serovar Patoc (strain Patoc 1 / Ames).